Here is a 427-residue protein sequence, read N- to C-terminus: 3-phosphoshikimate 1-carboxyvinyltransferase (427 aa).

The 3-phosphoshikimate site is built by K20, S21, and R25. K20 serves as a coordination point for phosphoenolpyruvate. Positions 90 and 118 each coordinate phosphoenolpyruvate. 6 residues coordinate 3-phosphoshikimate: S163, S164, Q165, S191, D309, and K336. A phosphoenolpyruvate-binding site is contributed by Q165. D309 serves as the catalytic Proton acceptor. R340 and R381 together coordinate phosphoenolpyruvate.

Belongs to the EPSP synthase family. Monomer.

It localises to the cytoplasm. The enzyme catalyses 3-phosphoshikimate + phosphoenolpyruvate = 5-O-(1-carboxyvinyl)-3-phosphoshikimate + phosphate. It functions in the pathway metabolic intermediate biosynthesis; chorismate biosynthesis. In terms of biological role, catalyzes the transfer of the enolpyruvyl moiety of phosphoenolpyruvate (PEP) to the 5-hydroxyl of shikimate-3-phosphate (S3P) to produce enolpyruvyl shikimate-3-phosphate and inorganic phosphate. The polypeptide is 3-phosphoshikimate 1-carboxyvinyltransferase (Methanococcoides burtonii (strain DSM 6242 / NBRC 107633 / OCM 468 / ACE-M)).